The primary structure comprises 640 residues: Threonine--tRNA ligase (640 aa).

Residues 1 to 61 form the TGS domain; the sequence is MPTITLPDGS…ERDASLQIIT (61 aa). The catalytic stretch occupies residues 242–533; that stretch reads DHRRIGKQLD…LIEHYAGAFP (292 aa). Residues cysteine 333, histidine 384, and histidine 510 each coordinate Zn(2+).

It belongs to the class-II aminoacyl-tRNA synthetase family. In terms of assembly, homodimer. Zn(2+) is required as a cofactor.

The protein resides in the cytoplasm. It catalyses the reaction tRNA(Thr) + L-threonine + ATP = L-threonyl-tRNA(Thr) + AMP + diphosphate + H(+). Its function is as follows. Catalyzes the attachment of threonine to tRNA(Thr) in a two-step reaction: L-threonine is first activated by ATP to form Thr-AMP and then transferred to the acceptor end of tRNA(Thr). Also edits incorrectly charged L-seryl-tRNA(Thr). The chain is Threonine--tRNA ligase from Stutzerimonas stutzeri (strain A1501) (Pseudomonas stutzeri).